The primary structure comprises 298 residues: HTH-type transcriptional regulator CzcR (298 aa).

The HTH lysR-type domain maps to 11 to 68 (MELRDLQIFQSVADQGSVSSAAKELNYVQSNVTARIKQLENELKTPLFYRHKRGMTLT). A DNA-binding region (H-T-H motif) is located at residues 28–47 (VSSAAKELNYVQSNVTARIK).

It belongs to the LysR transcriptional regulatory family.

The polypeptide is HTH-type transcriptional regulator CzcR (czcR) (Bacillus thuringiensis (strain Al Hakam)).